A 419-amino-acid polypeptide reads, in one-letter code: Cell division protein FtsZ (419 aa).

Residues 22–26, 109–111, E140, R144, and D188 each bind GTP; these read GGGGN and GSG. Positions 397–419 are disordered; the sequence is ERFEAPISQDEDELDTPPFFKNR.

This sequence belongs to the FtsZ family. In terms of assembly, homodimer. Polymerizes to form a dynamic ring structure in a strictly GTP-dependent manner. Interacts directly with several other division proteins. Interacts with CcrZ; the interaction is direct.

It localises to the cytoplasm. In terms of biological role, essential cell division protein that forms a contractile ring structure (Z ring) at the future cell division site. The regulation of the ring assembly controls the timing and the location of cell division. One of the functions of the FtsZ ring is to recruit other cell division proteins to the septum to produce a new cell wall between the dividing cells. Binds GTP and shows GTPase activity. The protein is Cell division protein FtsZ of Streptococcus pneumoniae serotype 2 (strain D39 / NCTC 7466).